Reading from the N-terminus, the 249-residue chain is 2,3-bisphosphoglycerate-dependent phosphoglycerate mutase (249 aa).

Residues R10–N17, T23–G24, R62, E89–Y92, K100, R116–R117, and G185–N186 each bind substrate. The Tele-phosphohistidine intermediate role is filled by H11. Catalysis depends on E89, which acts as the Proton donor/acceptor.

This sequence belongs to the phosphoglycerate mutase family. BPG-dependent PGAM subfamily. In terms of assembly, homodimer.

It catalyses the reaction (2R)-2-phosphoglycerate = (2R)-3-phosphoglycerate. Its pathway is carbohydrate degradation; glycolysis; pyruvate from D-glyceraldehyde 3-phosphate: step 3/5. Its function is as follows. Catalyzes the interconversion of 2-phosphoglycerate and 3-phosphoglycerate. The chain is 2,3-bisphosphoglycerate-dependent phosphoglycerate mutase from Hamiltonella defensa subsp. Acyrthosiphon pisum (strain 5AT).